The chain runs to 683 residues: Actin-binding LIM protein 3 (683 aa).

Methionine 1 is modified (N-acetylmethionine). LIM zinc-binding domains lie at 21-80 (IQCY…LYGT), 80-140 (TRCD…MASS), 149-208 (SHCA…QFGI), and 208-268 (IKCE…ARAE). 8 positions are modified to phosphoserine: serine 277, serine 280, serine 282, serine 286, serine 290, serine 337, serine 372, and serine 373. Positions 372-472 (SSPGYIDSPT…EDISQTSKYS (101 aa)) are disordered. Tyrosine 376 bears the Phosphotyrosine mark. Serine 379 and serine 388 each carry phosphoserine. Polar residues-rich tracts occupy residues 380-393 (PTYS…TFSR), 406-426 (GRSS…TSYQ), and 454-471 (STAT…TSKY). Residues serine 493, serine 503, and serine 504 each carry the phosphoserine modification. Threonine 543 is subject to Phosphothreonine. A phosphoserine mark is found at serine 567, serine 576, and serine 607. Residues 615–683 (MREYKIYPYE…NELKKQARLF (69 aa)) form the HP domain. An Omega-N-methylarginine modification is found at arginine 631.

As to quaternary structure, directly interacts with F-actin and ABRA. Expressed predominantly in heart and brain.

The protein resides in the cytoplasm. Its function is as follows. May act as scaffold protein. May stimulate ABRA activity and ABRA-dependent SRF transcriptional activity. The protein is Actin-binding LIM protein 3 (ABLIM3) of Homo sapiens (Human).